Here is a 268-residue protein sequence, read N- to C-terminus: Non-homologous end joining protein Ku (268 aa).

One can recognise a Ku domain in the interval 13–175 (VSLVTCPVTM…TLHDGNAVRN (163 aa)). The disordered stretch occupies residues 174–194 (RNGGHPAARTRPASEAESADS).

Belongs to the prokaryotic Ku family. As to quaternary structure, homodimer. Interacts with LigD.

In terms of biological role, with LigD forms a non-homologous end joining (NHEJ) DNA repair enzyme, which repairs dsDNA breaks with reduced fidelity. Binds linear dsDNA with 5'- and 3'- overhangs but not closed circular dsDNA nor ssDNA. Recruits and stimulates the ligase activity of LigD. This is Non-homologous end joining protein Ku from Gluconacetobacter diazotrophicus (strain ATCC 49037 / DSM 5601 / CCUG 37298 / CIP 103539 / LMG 7603 / PAl5).